Here is a 147-residue protein sequence, read N- to C-terminus: Anti-sigma F factor (147 aa).

The protein belongs to the anti-sigma-factor family.

The enzyme catalyses L-seryl-[protein] + ATP = O-phospho-L-seryl-[protein] + ADP + H(+). It catalyses the reaction L-threonyl-[protein] + ATP = O-phospho-L-threonyl-[protein] + ADP + H(+). Functionally, binds to sigma F and blocks its ability to form an RNA polymerase holoenzyme (E-sigma F). Phosphorylates SpoIIAA on a serine residue. This phosphorylation may enable SpoIIAA to act as an anti-anti-sigma factor that counteracts SpoIIAB and thus releases sigma F from inhibition. This is Anti-sigma F factor from Priestia megaterium (Bacillus megaterium).